Consider the following 103-residue polypeptide: Large ribosomal subunit protein uL24 (103 aa).

This sequence belongs to the universal ribosomal protein uL24 family. In terms of assembly, part of the 50S ribosomal subunit.

Functionally, one of two assembly initiator proteins, it binds directly to the 5'-end of the 23S rRNA, where it nucleates assembly of the 50S subunit. Its function is as follows. One of the proteins that surrounds the polypeptide exit tunnel on the outside of the subunit. This chain is Large ribosomal subunit protein uL24, found in Sinorhizobium fredii (strain NBRC 101917 / NGR234).